The primary structure comprises 295 residues: 33 kDa chaperonin (295 aa).

Cystine bridges form between Cys-230–Cys-232 and Cys-264–Cys-267.

It belongs to the HSP33 family. Post-translationally, under oxidizing conditions two disulfide bonds are formed involving the reactive cysteines. Under reducing conditions zinc is bound to the reactive cysteines and the protein is inactive.

It is found in the cytoplasm. Its function is as follows. Redox regulated molecular chaperone. Protects both thermally unfolding and oxidatively damaged proteins from irreversible aggregation. Plays an important role in the bacterial defense system toward oxidative stress. The protein is 33 kDa chaperonin of Ectopseudomonas mendocina (strain ymp) (Pseudomonas mendocina).